An 84-amino-acid polypeptide reads, in one-letter code: Large ribosomal subunit protein bL27 (84 aa).

Residues 1–21 (MAHKKGGGSTKNGRDSNPKYL) are disordered.

This sequence belongs to the bacterial ribosomal protein bL27 family.

This chain is Large ribosomal subunit protein bL27, found in Chlorobaculum parvum (strain DSM 263 / NCIMB 8327) (Chlorobium vibrioforme subsp. thiosulfatophilum).